The chain runs to 830 residues: WD repeat-containing protein 75 (830 aa).

WD repeat units lie at residues 4-43 (EENI…KVYS), 47-86 (EECV…KLWD), 90-131 (GILI…QLVS), 145-184 (KELS…YFFK), 193-231 (LSSS…RLWR), 237-276 (KKYT…VEWR), 279-318 (TEKN…IIIH), 324-362 (SAVI…QFYS), and 376-423 (QQEY…KLWM). Residue K123 forms a Glycyl lysine isopeptide (Lys-Gly) (interchain with G-Cter in SUMO2) linkage. A Glycyl lysine isopeptide (Lys-Gly) (interchain with G-Cter in SUMO2) cross-link involves residue K427. 4 WD repeats span residues 430–474 (GFIL…KVWI), 487–525 (GWTC…TIWD), 529–569 (WELK…CCWN), and 574–611 (ALEW…FVFK). At K466 the chain carries N6-acetyllysine. Phosphoserine occurs at positions 664 and 672. A Glycyl lysine isopeptide (Lys-Gly) (interchain with G-Cter in SUMO2) cross-link involves residue K676. The interval 763 to 806 (SAKEIPEDVDMEEEKESEDSDEENDFTEKVQDTSNTGLGEDIIH) is disordered. Residues 769-787 (EDVDMEEEKESEDSDEEND) are compositionally biased toward acidic residues. Residues S779, S782, S796, and S811 each carry the phosphoserine modification.

As to quaternary structure, component of the proposed t-UTP subcomplex of the ribosomal small subunit (SSU) processome. SSU processome is composed of more than 70 proteins and the RNA chaperone small nucleolar RNA (snoRNA) U3.

The protein resides in the nucleus. Its subcellular location is the nucleolus. In terms of biological role, ribosome biogenesis factor. Part of the small subunit (SSU) processome, first precursor of the small eukaryotic ribosomal subunit. During the assembly of the SSU processome in the nucleolus, many ribosome biogenesis factors, an RNA chaperone and ribosomal proteins associate with the nascent pre-rRNA and work in concert to generate RNA folding, modifications, rearrangements and cleavage as well as targeted degradation of pre-ribosomal RNA by the RNA exosome. Involved in nucleolar processing of pre-18S ribosomal RNA. Required for optimal pre-ribosomal RNA transcription by RNA polymerase I. The polypeptide is WD repeat-containing protein 75 (Homo sapiens (Human)).